The following is a 776-amino-acid chain: G protein-regulated inducer of neurite outgrowth 3 (776 aa).

Disordered regions lie at residues 1–37 (MGTVPDPLRSAKTSLIAASGKEDDLGEPQAASPRHRP) and 68–312 (VCEH…IKEV). Low complexity predominate over residues 101–118 (QLPGSSQPAASAPSSAAG). Composition is skewed to polar residues over residues 129 to 161 (PANQHTCQSIPGDQPNAITSSMPEDSLMRSQRT) and 193 to 203 (ETIQGTVQTPV). The span at 208 to 217 (VVSHSSSPVG) shows a compositional bias: low complexity. Residues 242–274 (SGCSENKQPSVTASGPQGTTSVTPQPTPLTSEP) show a composition bias toward polar residues. A phosphoserine mark is found at S332 and S365. 2 disordered regions span residues 518–637 (ISKA…RPSR) and 723–748 (LIKTQNSQTRRSISSDTSSNKKLRGR). Residues 520–552 (KADHSGSLDPTNKGDAREKKPASPQVVKEKEST) show a composition bias toward basic and acidic residues. Positions 566 to 580 (PKSQESGGTESAANP) are enriched in polar residues. Residues 604–620 (SLSLPSDPMGDSSPGSG) are compositionally biased toward low complexity. The span at 725-742 (KTQNSQTRRSISSDTSSN) shows a compositional bias: polar residues.

In terms of biological role, may be involved in neurite outgrowth. This chain is G protein-regulated inducer of neurite outgrowth 3 (GPRIN3), found in Homo sapiens (Human).